Consider the following 276-residue polypeptide: Rhomboid protease GlpG (276 aa).

The next 6 helical transmembrane spans lie at 94–114 (AGPLTLSVMVVTIAVFILMQI), 142–162 (ALLHFSLLHILFNLMWWWYLG), 168–188 (VLGTGKLLVIALVSALVSGWA), 193–213 (SGTYFGGLSGVVYALMGYVWL), 229–249 (LMAFALLWLVAGYFDILGMSI), and 250–270 (ANAAHVAGLIVGLLMAFWDTY). The active-site Nucleophile is S201. H254 is an active-site residue.

This sequence belongs to the peptidase S54 family.

Its subcellular location is the cell inner membrane. The catalysed reaction is Cleaves type-1 transmembrane domains using a catalytic dyad composed of serine and histidine that are contributed by different transmembrane domains.. Rhomboid-type serine protease that catalyzes intramembrane proteolysis. This chain is Rhomboid protease GlpG, found in Pectobacterium atrosepticum (strain SCRI 1043 / ATCC BAA-672) (Erwinia carotovora subsp. atroseptica).